A 156-amino-acid chain; its full sequence is Transcriptional repressor NrdR (156 aa).

A zinc finger spans residues 3–34 (CPKCNSTQSKVVDSRHADELNAIRRRRECENC). The 91-residue stretch at 49–139 (LIVVKKDGTR…VYKEFKDVDQ (91 aa)) folds into the ATP-cone domain.

Belongs to the NrdR family. Zn(2+) is required as a cofactor.

Functionally, negatively regulates transcription of bacterial ribonucleotide reductase nrd genes and operons by binding to NrdR-boxes. This chain is Transcriptional repressor NrdR, found in Staphylococcus aureus (strain NCTC 8325 / PS 47).